The sequence spans 74 residues: Sec-independent protein translocase protein TatA (74 aa).

Residues 1-21 (MGTFSIWHWLIVLLVVVVVFG) form a helical membrane-spanning segment. Residues 50 to 74 (TAPAGQVANQSTADQTIDVQTKPKG) are disordered. Polar residues predominate over residues 56-68 (VANQSTADQTIDV).

It belongs to the TatA/E family. As to quaternary structure, the Tat system comprises two distinct complexes: a TatABC complex, containing multiple copies of TatA, TatB and TatC subunits, and a separate TatA complex, containing only TatA subunits. Substrates initially bind to the TatABC complex, which probably triggers association of the separate TatA complex to form the active translocon.

It localises to the cell inner membrane. Functionally, part of the twin-arginine translocation (Tat) system that transports large folded proteins containing a characteristic twin-arginine motif in their signal peptide across membranes. TatA could form the protein-conducting channel of the Tat system. This Verminephrobacter eiseniae (strain EF01-2) protein is Sec-independent protein translocase protein TatA.